The chain runs to 65 residues: Large ribosomal subunit protein uL30 (65 aa).

The protein belongs to the universal ribosomal protein uL30 family. In terms of assembly, part of the 50S ribosomal subunit.

This chain is Large ribosomal subunit protein uL30, found in Desulfosudis oleivorans (strain DSM 6200 / JCM 39069 / Hxd3) (Desulfococcus oleovorans).